We begin with the raw amino-acid sequence, 1079 residues long: Electrogenic sodium bicarbonate cotransporter 1 (1079 aa).

The interval 1 to 62 (MEDEAVLDRG…EKKEKERISE (62 aa)) is required for interaction with AHCYL1. Over 1 to 466 (MEDEAVLDRG…FASDFYDALN (466 aa)) the chain is Cytoplasmic. Glu2 is modified (phosphoserine). Tyr30 carries the phosphotyrosine modification. A compositionally biased stretch (basic residues) spans 39–52 (YRRRRRHKRKAGHK). The disordered stretch occupies residues 39-78 (YRRRRRHKRKAGHKEKKEKERISENYSDKSDVENADESSS). Basic and acidic residues predominate over residues 53-70 (EKKEKERISENYSDKSDV). Phosphoserine is present on residues Ser61, Ser65, Ser68, Ser223, Ser232, Ser233, and Ser245. The segment at 235 to 266 (SRMFSNPDNGSPAMTHRNLTSSSLNDISDKPE) is disordered. 2 positions are modified to phosphothreonine: Thr249 and Thr254. Positions 251–260 (RNLTSSSLND) are enriched in polar residues. Phosphoserine is present on residues Ser256, Ser257, and Ser262. A helical membrane pass occupies residues 467 to 491 (IQALSAILFIYLATVTNAITFGGLL). Topologically, residues 492–501 (GDATDNMQGV) are extracellular. The helical transmembrane segment at 502–520 (LESFLGTAVSGAIFCLFAG) threads the bilayer. A topological domain (cytoplasmic) is located at residue Gln521. A discontinuously helical transmembrane segment spans residues 522–542 (PLTILSSTGPVLVFERLLFNF). Residues 543-550 (SKDHSFDY) lie on the Extracellular side of the membrane. The helical transmembrane segment at 551–571 (LEFRLWIGLWSAFMCLILVAT) threads the bilayer. Residues 572 to 585 (DASFLVQYFTRFTE) are Cytoplasmic-facing. The chain crosses the membrane as a helical span at residues 586-609 (EGFSSLISFIFIYDAFKKMIKLAD). 2 N-linked (GlcNAc) asparagine glycosylation sites follow: Ile597 and Phe617. Topologically, residues 610 to 692 (YYPINSDFRV…GNNCDFVPDI (83 aa)) are extracellular. Residues 693 to 710 (TLMSFILFLGTYTSSMAM) form a helical membrane-spanning segment. Topologically, residues 711-725 (KKFKTSRYFPTTARK) are cytoplasmic. The helical transmembrane segment at 726-745 (LISDFAIILSILIFCVIDAL) threads the bilayer. Residues 746 to 779 (VGVDTPKLIVPSEFKPTSPHRGWFVPPFGGNPWW) are Extracellular-facing. The interaction with CA4 stretch occupies residues 748–779 (VDTPKLIVPSEFKPTSPHRGWFVPPFGGNPWW). The helical transmembrane segment at 780–807 (VCLAAAIPALLVTILIFMDQQITAVIVN) threads the bilayer. The Cytoplasmic segment spans residues 808-819 (RKEHKLKKGAGY). A helical membrane pass occupies residues 820-836 (HLDLFWVAILMVVCSFM). Position 837 (Ala837) is a topological domain, extracellular. A discontinuously helical membrane pass occupies residues 838-855 (LPWYVAATVISIAHIDSL). The Cytoplasmic segment spans residues 856 to 877 (KMETETSAPGEQPKFLGVREQR). A helical membrane pass occupies residues 878–894 (VTGTLVFILTGLSVFMA). Topologically, residues 895–901 (PILKFIP) are extracellular. A helical transmembrane segment spans residues 902 to 918 (MPVLYGVFLYMGVASLN). At 919–960 (GVQFMDRLKLLLMPLKHQPDFIYLRHVPLRRVHLFTSLQVLC) the chain is on the cytoplasmic side. Positions 961 to 986 (LALLWILKSTVAAIIFPVMILALVAV) form an intramembrane region, discontinuously helical. Over 987 to 1079 (RKGMDYLFSQ…STFLERHTSC (93 aa)) the chain is Cytoplasmic. Residues 1002-1004 (LDD) are CA2-binding. The disordered stretch occupies residues 1012 to 1079 (KKKEDEKKKK…STFLERHTSC (68 aa)). Ser1026 and Ser1029 each carry phosphoserine. Position 1026 is a phosphoserine; by PKA (Ser1026). The interval 1030-1033 (DNDD) is CA2-binding. A phosphoserine mark is found at Ser1034 and Ser1044. A required for basolateral targeting region spans residues 1057-1059 (FLS). Asp1060, Leu1064, Ser1069, and Ser1078 each carry phosphoserine. A compositionally biased stretch (basic and acidic residues) spans 1062 to 1079 (KPLDRERSSTFLERHTSC).

The protein belongs to the anion exchanger (TC 2.A.31) family. Homodimer. Interacts with CA2/carbonic anhydrase 2 and CA4/carbonic anhydrase 4 which may regulate transporter activity. Isoform 1 but not isoform 2 interacts with AHCYL1 (via PEST domain when phosphorylated); the interaction increases SLC4A4 isoform 1 activity. Interacts with AHCYL2. Post-translationally, phosphorylation of Ser-1026 by PKA increases the binding of CA2 and changes the Na(+):HCO3(-) stoichiometry of the transporter from 3:1 to 2:1. Phosphorylated in presence of STK39 and dephosphorylated in presence of PP1 phosphatase; phosphorylation seems to inhibit SLC4A4 activity. N-glycosylation is not necessary for the transporter basic functions. Specifically expressed in kidney and to a lower extent in liver, lung, spleen, brain, skeletal muscle and heart. In kidney, expressed in proximal tubules at the corticomedullary junction. Isoform 2 is specifically expressed in kidney. Isoform 1 is expressed in kidney and pancreas while isoform 3 is specifically expressed in brain (at protein level). In brain, isoform 1 is expressed in astrocytes while isoform 3 is expressed in neurons (at protein level). In the eye, isoform 1 is expressed in cornea, conjunctiva, lens epithelium, ciliary bodies and retina while isoform 2 is detected only in the conjunctiva.

It localises to the basolateral cell membrane. The protein localises to the cell membrane. It catalyses the reaction 2 hydrogencarbonate(out) + Na(+)(out) = 2 hydrogencarbonate(in) + Na(+)(in). The enzyme catalyses 3 hydrogencarbonate(out) + Na(+)(out) = 3 hydrogencarbonate(in) + Na(+)(in). Inhibited by 4,4'-diisothiocyanatostilbene-2,2'-disulfonic acid (DIDS). Functionally, electrogenic sodium/bicarbonate cotransporter with a Na(+):HCO3(-) stoichiometry varying from 1:2 to 1:3. May regulate bicarbonate influx/efflux at the basolateral membrane of cells and regulate intracellular pH. The sequence is that of Electrogenic sodium bicarbonate cotransporter 1 (Slc4a4) from Rattus norvegicus (Rat).